The following is a 111-amino-acid chain: Nascent polypeptide-associated complex protein (111 aa).

The NAC-A/B domain occupies 3–72; the sequence is GMNPRQMKKL…EEVREVLEIS (70 aa).

It belongs to the NAC-alpha family. Homodimer. Interacts with the ribosome. Binds ribosomal RNA.

Its function is as follows. Contacts the emerging nascent chain on the ribosome. In Thermococcus kodakarensis (strain ATCC BAA-918 / JCM 12380 / KOD1) (Pyrococcus kodakaraensis (strain KOD1)), this protein is Nascent polypeptide-associated complex protein.